The following is a 202-amino-acid chain: Small ribosomal subunit protein uS5 (202 aa).

Residues 42-105 enclose the S5 DRBM domain; it reads LKDEVLKIMP…ILAKLSIVPV (64 aa). Thr-192 carries the post-translational modification Phosphothreonine.

This sequence belongs to the universal ribosomal protein uS5 family. As to quaternary structure, component of the small ribosomal subunit. Interacts with zinc finger protein ZNF277 (via zinc-finger domains); the interaction is direct; the interaction is extra-ribosomal. Interaction with ZNF277 competes with the binding of RPS2 to protein arginine methyltransferase PRMT3. In terms of processing, citrullinated by PADI4 in the Arg/Gly-rich region. Post-translationally, asymmetric arginine dimethylation by PRMT3 occurs at multiple sites in the Arg/Gly-rich region. Monoubiquitinated by RNF10 when a ribosome has stalled during translation, leading to its degradation by the proteasome. Deubiquitinated by USP10, preventing degradation by the proteasome and promoting 40S ribosome subunit recycling following ribosome dissociation.

Its subcellular location is the cytoplasm. It localises to the nucleus. The protein resides in the nucleolus. Component of the ribosome, a large ribonucleoprotein complex responsible for the synthesis of proteins in the cell. The small ribosomal subunit (SSU) binds messenger RNAs (mRNAs) and translates the encoded message by selecting cognate aminoacyl-transfer RNA (tRNA) molecules. The large subunit (LSU) contains the ribosomal catalytic site termed the peptidyl transferase center (PTC), which catalyzes the formation of peptide bonds, thereby polymerizing the amino acids delivered by tRNAs into a polypeptide chain. The nascent polypeptides leave the ribosome through a tunnel in the LSU and interact with protein factors that function in enzymatic processing, targeting, and the membrane insertion of nascent chains at the exit of the ribosomal tunnel. Plays a role in the assembly and function of the 40S ribosomal subunit. Mutations in this protein affects the control of translational fidelity. Involved in nucleolar processing of pre-18S ribosomal RNA and ribosome assembly. This is Small ribosomal subunit protein uS5 (RPS2) from Cricetulus griseus (Chinese hamster).